A 594-amino-acid chain; its full sequence is Neopentalenolactone D synthase (594 aa).

Residues 64–65 (IG), 86–87 (DK), 94–95 (TW), 106–107 (DV), Y112, V156, and M494 contribute to the FAD site.

The protein belongs to the FAD-binding monooxygenase family. It depends on FAD as a cofactor.

The enzyme catalyses 1-deoxy-11-oxopentalenate + NADPH + O2 + H(+) = neopentalenolactone D + NADP(+) + H2O. It participates in antibiotic biosynthesis; neopentalenolactone biosynthesis. Catalyzes the flavin-dependent Baeyer-Villiger oxidation of 1-deoxy-11-oxopentalenic acid to neopentalenolactone D in the biosynthesis of neopentalenolactone antibiotic. The polypeptide is Neopentalenolactone D synthase (ptlE) (Streptomyces avermitilis (strain ATCC 31267 / DSM 46492 / JCM 5070 / NBRC 14893 / NCIMB 12804 / NRRL 8165 / MA-4680)).